The following is a 418-amino-acid chain: tRNA(Met) cytidine acetate ligase (418 aa).

The ATP site is built by Gly-95, Asn-161, and Arg-186.

It belongs to the TmcAL family.

It localises to the cytoplasm. It carries out the reaction cytidine(34) in elongator tRNA(Met) + acetate + ATP = N(4)-acetylcytidine(34) in elongator tRNA(Met) + AMP + diphosphate. Functionally, catalyzes the formation of N(4)-acetylcytidine (ac(4)C) at the wobble position of elongator tRNA(Met), using acetate and ATP as substrates. First activates an acetate ion to form acetyladenylate (Ac-AMP) and then transfers the acetyl group to tRNA to form ac(4)C34. This is tRNA(Met) cytidine acetate ligase from Thermotoga maritima (strain ATCC 43589 / DSM 3109 / JCM 10099 / NBRC 100826 / MSB8).